The sequence spans 507 residues: Ribosomal protein uS12 methylthiotransferase RimO (507 aa).

One can recognise an MTTase N-terminal domain in the interval 13 to 124 (RRVALLTLGC…ISDRLGAVLA (112 aa)). [4Fe-4S] cluster-binding residues include Cys-22, Cys-58, Cys-87, Cys-205, Cys-209, and Cys-212. In terms of domain architecture, Radical SAM core spans 191–422 (LDTGPVASLK…ALADELCAQR (232 aa)). Residues 424–497 (EQRLGSTVQV…GVDLVAVPDA (74 aa)) form the TRAM domain.

Belongs to the methylthiotransferase family. RimO subfamily. [4Fe-4S] cluster serves as cofactor.

It is found in the cytoplasm. It carries out the reaction L-aspartate(89)-[ribosomal protein uS12]-hydrogen + (sulfur carrier)-SH + AH2 + 2 S-adenosyl-L-methionine = 3-methylsulfanyl-L-aspartate(89)-[ribosomal protein uS12]-hydrogen + (sulfur carrier)-H + 5'-deoxyadenosine + L-methionine + A + S-adenosyl-L-homocysteine + 2 H(+). In terms of biological role, catalyzes the methylthiolation of an aspartic acid residue of ribosomal protein uS12. The protein is Ribosomal protein uS12 methylthiotransferase RimO of Salinispora tropica (strain ATCC BAA-916 / DSM 44818 / JCM 13857 / NBRC 105044 / CNB-440).